The primary structure comprises 412 residues: Alpha-1-antiproteinase (412 aa).

The signal sequence occupies residues Met1 to Ala24. At Ser33 the chain carries Phosphoserine. N-linked (GlcNAc...) asparagine glycans are attached at residues Asn100, Asn133, Asn264, and Asn313. Residues Ala367 to Lys386 form an RCL region. A Phosphoserine modification is found at Ser377.

Belongs to the serpin family. As to quaternary structure, interacts with CELA2A. Interacts with ERGIC3 and LMAN1/ERGIC53. Interacts with PRSS1/Trypsin. As to expression, expressed not only in liver but also in kidney tubule cells, where it is regulated by androgens during development.

The protein resides in the secreted. In terms of biological role, inhibitor of serine proteases. Its primary target is elastase, but it also has a moderate affinity for plasmin and thrombin. This Mus caroli (Ryukyu mouse) protein is Alpha-1-antiproteinase (Serpina1).